The following is a 154-amino-acid chain: Large ribosomal subunit protein uL13 (154 aa).

The protein belongs to the universal ribosomal protein uL13 family. As to quaternary structure, part of the 50S ribosomal subunit.

In terms of biological role, this protein is one of the early assembly proteins of the 50S ribosomal subunit, although it is not seen to bind rRNA by itself. It is important during the early stages of 50S assembly. The sequence is that of Large ribosomal subunit protein uL13 from Rhodopseudomonas palustris (strain BisB18).